The following is a 67-amino-acid chain: Beta-defensin 14 (67 aa).

The signal sequence occupies residues 1–22 (MRLHYLLFVFLILFLVPAPGDA). Intrachain disulfides connect Cys-33/Cys-62, Cys-40/Cys-55, and Cys-45/Cys-63.

This sequence belongs to the beta-defensin family.

The protein resides in the secreted. In terms of biological role, has antibacterial activity. The polypeptide is Beta-defensin 14 (Defb14) (Mus musculus (Mouse)).